Reading from the N-terminus, the 2455-residue chain is Ectopic P granules protein 5 homolog (2455 aa).

The interval 1-42 is disordered; it reads MATLEKPKKEKSKKSRNRVPIEKEEEEPAELSTSEEQRPAEN. A Phosphoserine modification is found at Ser-44. Positions 77–105 are disordered; that stretch reads VTSQEPEGTQEPTETEAQPSAPSAPPSTT. A compositionally biased stretch (low complexity) spans 80–97; the sequence is QEPEGTQEPTETEAQPSA. Ser-467 is subject to Phosphoserine.

This sequence belongs to the EPG5 family.

It localises to the cytoplasm. It is found in the perinuclear region. The protein localises to the lysosome. Functionally, involved in autophagy. Plays a role in late steps of autophagy. The protein is Ectopic P granules protein 5 homolog of Drosophila melanogaster (Fruit fly).